A 221-amino-acid chain; its full sequence is Protein N-terminal glutamine amidohydrolase (221 aa).

S2 is subject to N-acetylserine. Catalysis depends on residues C23, H79, and D97.

This sequence belongs to the NTAQ1 family. Monomer.

The catalysed reaction is N-terminal L-glutaminyl-[protein] + H2O = N-terminal L-glutamyl-[protein] + NH4(+). Mediates the side-chain deamidation of N-terminal glutamine residues to glutamate, an important step in N-end rule pathway of protein degradation. Conversion of the resulting N-terminal glutamine to glutamate renders the protein susceptible to arginylation, polyubiquitination and degradation as specified by the N-end rule. Does not act on substrates with internal or C-terminal glutamine and does not act on non-glutamine residues in any position. Involved in immune response. Controls the expression of specific defense-response genes, activates the synthesis pathway for the phytoalexin camalexin, and influences basal resistance to the hemibiotroph pathogen Pseudomonas syringae pv tomato (Pst). The chain is Protein N-terminal glutamine amidohydrolase from Arabidopsis thaliana (Mouse-ear cress).